Reading from the N-terminus, the 540-residue chain is Tyrosine-protein kinase transforming protein erbB (540 aa).

One can recognise a Protein kinase domain in the interval 132–399; sequence FKKVKVLGFG…KMARDPPRYL (268 aa). ATP contacts are provided by residues 138–146 and lysine 165; that span reads LGFGAFGTV. The active-site Proton acceptor is aspartate 257.

This sequence belongs to the protein kinase superfamily. Tyr protein kinase family. EGF receptor subfamily.

It carries out the reaction L-tyrosyl-[protein] + ATP = O-phospho-L-tyrosyl-[protein] + ADP + H(+). The chain is Tyrosine-protein kinase transforming protein erbB (V-ERBB) from Avian erythroblastosis virus (strain ts167).